We begin with the raw amino-acid sequence, 345 residues long: Ketol-acid reductoisomerase (NADP(+)) (345 aa).

The region spanning 2–182 (AKVYHDSSAD…GTTRAGVLET (181 aa)) is the KARI N-terminal Rossmann domain. NADP(+) is bound by residues 25-28 (YGSQ), Arg-48, Ser-51, Ser-53, and 83-86 (DTEQ). His-108 is an active-site residue. Gly-134 serves as a coordination point for NADP(+). The KARI C-terminal knotted domain occupies 183–328 (TFKEETETDL…AQLRDMMTFL (146 aa)). Asp-191, Glu-195, Glu-227, and Glu-231 together coordinate Mg(2+). Ser-252 lines the substrate pocket.

This sequence belongs to the ketol-acid reductoisomerase family. The cofactor is Mg(2+).

The catalysed reaction is (2R)-2,3-dihydroxy-3-methylbutanoate + NADP(+) = (2S)-2-acetolactate + NADPH + H(+). It carries out the reaction (2R,3R)-2,3-dihydroxy-3-methylpentanoate + NADP(+) = (S)-2-ethyl-2-hydroxy-3-oxobutanoate + NADPH + H(+). The protein operates within amino-acid biosynthesis; L-isoleucine biosynthesis; L-isoleucine from 2-oxobutanoate: step 2/4. It participates in amino-acid biosynthesis; L-valine biosynthesis; L-valine from pyruvate: step 2/4. Functionally, involved in the biosynthesis of branched-chain amino acids (BCAA). Catalyzes an alkyl-migration followed by a ketol-acid reduction of (S)-2-acetolactate (S2AL) to yield (R)-2,3-dihydroxy-isovalerate. In the isomerase reaction, S2AL is rearranged via a Mg-dependent methyl migration to produce 3-hydroxy-3-methyl-2-ketobutyrate (HMKB). In the reductase reaction, this 2-ketoacid undergoes a metal-dependent reduction by NADPH to yield (R)-2,3-dihydroxy-isovalerate. The polypeptide is Ketol-acid reductoisomerase (NADP(+)) (Koribacter versatilis (strain Ellin345)).